The sequence spans 430 residues: RNA pseudouridine synthase 2, chloroplastic (430 aa).

A chloroplast-targeting transit peptide spans 1–43 (MLSISQLPSFSLTTAKSLRYPSSPSSSLSIFFSFFPKVSNFVR). The S4 RNA-binding domain occupies 82-155 (IRLDSWISSR…IPLDIVYEDK (74 aa)). A disordered region spans residues 195-222 (SNSEEDDDSDEETFSDDEEMTTSPSSYA). Residues 196–214 (NSEEDDDSDEETFSDDEEM) show a composition bias toward acidic residues. Asp-234 is a catalytic residue.

This sequence belongs to the pseudouridine synthase RluA family.

It localises to the plastid. It is found in the chloroplast. The enzyme catalyses a uridine in RNA = a pseudouridine in RNA. The protein is RNA pseudouridine synthase 2, chloroplastic of Arabidopsis thaliana (Mouse-ear cress).